We begin with the raw amino-acid sequence, 375 residues long: tRNA-specific 2-thiouridylase MnmA (375 aa).

ATP contacts are provided by residues 8 to 15 (GLSGGVDS) and M34. Residues 104 to 106 (NPD) are interaction with target base in tRNA. Catalysis depends on C109, which acts as the Nucleophile. C109 and C208 are disulfide-bonded. Residue G134 participates in ATP binding. An interaction with tRNA region spans residues 158–160 (KDQ). C208 serves as the catalytic Cysteine persulfide intermediate. The tract at residues 321–322 (RY) is interaction with tRNA.

This sequence belongs to the MnmA/TRMU family.

It localises to the cytoplasm. It carries out the reaction S-sulfanyl-L-cysteinyl-[protein] + uridine(34) in tRNA + AH2 + ATP = 2-thiouridine(34) in tRNA + L-cysteinyl-[protein] + A + AMP + diphosphate + H(+). Its function is as follows. Catalyzes the 2-thiolation of uridine at the wobble position (U34) of tRNA, leading to the formation of s(2)U34. In Mycoplasma capricolum subsp. capricolum (strain California kid / ATCC 27343 / NCTC 10154), this protein is tRNA-specific 2-thiouridylase MnmA.